Reading from the N-terminus, the 428-residue chain is C4-dicarboxylate transport protein (428 aa).

9 helical membrane-spanning segments follow: residues Ser4–Gly24, Leu44–Met64, Val76–Val96, Ile142–Phe162, Val184–Met204, Leu222–Ala242, Val289–Leu309, Ile326–Val346, and Ile352–Ile372.

This sequence belongs to the dicarboxylate/amino acid:cation symporter (DAACS) (TC 2.A.23) family.

The protein localises to the cell inner membrane. Functionally, responsible for the transport of dicarboxylates such as succinate, fumarate, and malate from the periplasm across the membrane. The polypeptide is C4-dicarboxylate transport protein (Salmonella gallinarum (strain 287/91 / NCTC 13346)).